Here is a 239-residue protein sequence, read N- to C-terminus: Aspartate/glutamate leucyltransferase (239 aa).

It belongs to the R-transferase family. Bpt subfamily.

The protein resides in the cytoplasm. It carries out the reaction N-terminal L-glutamyl-[protein] + L-leucyl-tRNA(Leu) = N-terminal L-leucyl-L-glutamyl-[protein] + tRNA(Leu) + H(+). The enzyme catalyses N-terminal L-aspartyl-[protein] + L-leucyl-tRNA(Leu) = N-terminal L-leucyl-L-aspartyl-[protein] + tRNA(Leu) + H(+). Its function is as follows. Functions in the N-end rule pathway of protein degradation where it conjugates Leu from its aminoacyl-tRNA to the N-termini of proteins containing an N-terminal aspartate or glutamate. This chain is Aspartate/glutamate leucyltransferase, found in Campylobacter jejuni subsp. jejuni serotype O:6 (strain 81116 / NCTC 11828).